The following is a 501-amino-acid chain: ATP synthase subunit alpha (501 aa).

170 to 177 (GDRQTGKS) provides a ligand contact to ATP.

It belongs to the ATPase alpha/beta chains family. As to quaternary structure, F-type ATPases have 2 components, CF(1) - the catalytic core - and CF(0) - the membrane proton channel. CF(1) has five subunits: alpha(3), beta(3), gamma(1), delta(1), epsilon(1). CF(0) has three main subunits: a(1), b(2) and c(9-12). The alpha and beta chains form an alternating ring which encloses part of the gamma chain. CF(1) is attached to CF(0) by a central stalk formed by the gamma and epsilon chains, while a peripheral stalk is formed by the delta and b chains.

It is found in the cell membrane. It catalyses the reaction ATP + H2O + 4 H(+)(in) = ADP + phosphate + 5 H(+)(out). Its function is as follows. Produces ATP from ADP in the presence of a proton gradient across the membrane. The alpha chain is a regulatory subunit. The chain is ATP synthase subunit alpha from Acholeplasma laidlawii (strain PG-8A).